A 444-amino-acid polypeptide reads, in one-letter code: NADH-quinone oxidoreductase subunit F (444 aa).

62-71 is an NAD(+) binding site; it reads GRGGAGFLTG. 177-224 serves as a coordination point for FMN; it reads GAGRYICGEETALINSLEGRRANPRFKPPFPAYVGLWGKPTCVNNVET. [4Fe-4S] cluster contacts are provided by cysteine 354, cysteine 357, cysteine 360, and cysteine 401.

This sequence belongs to the complex I 51 kDa subunit family. Composed of 13 different subunits. Subunits NuoCD, E, F, and G constitute the peripheral sector of the complex. [4Fe-4S] cluster serves as cofactor. FMN is required as a cofactor.

The catalysed reaction is a quinone + NADH + 5 H(+)(in) = a quinol + NAD(+) + 4 H(+)(out). Its function is as follows. NDH-1 shuttles electrons from NADH, via FMN and iron-sulfur (Fe-S) centers, to quinones in the respiratory chain. Couples the redox reaction to proton translocation (for every two electrons transferred, four hydrogen ions are translocated across the cytoplasmic membrane), and thus conserves the redox energy in a proton gradient. The protein is NADH-quinone oxidoreductase subunit F (nuoF) of Buchnera aphidicola subsp. Baizongia pistaciae (strain Bp).